A 314-amino-acid chain; its full sequence is GTP cyclohydrolase FolE2 (314 aa).

The interval D290–R314 is disordered. Positions A291–Q305 are enriched in low complexity.

The protein belongs to the GTP cyclohydrolase IV family.

The enzyme catalyses GTP + H2O = 7,8-dihydroneopterin 3'-triphosphate + formate + H(+). It functions in the pathway cofactor biosynthesis; 7,8-dihydroneopterin triphosphate biosynthesis; 7,8-dihydroneopterin triphosphate from GTP: step 1/1. In terms of biological role, converts GTP to 7,8-dihydroneopterin triphosphate. This is GTP cyclohydrolase FolE2 from Pseudomonas putida (strain ATCC 700007 / DSM 6899 / JCM 31910 / BCRC 17059 / LMG 24140 / F1).